Here is a 293-residue protein sequence, read N- to C-terminus: Elongation factor Ts (293 aa).

Residues T79–V82 form an involved in Mg(2+) ion dislocation from EF-Tu region.

Belongs to the EF-Ts family.

It is found in the cytoplasm. Associates with the EF-Tu.GDP complex and induces the exchange of GDP to GTP. It remains bound to the aminoacyl-tRNA.EF-Tu.GTP complex up to the GTP hydrolysis stage on the ribosome. In Macrococcus caseolyticus (strain JCSC5402) (Macrococcoides caseolyticum), this protein is Elongation factor Ts.